Consider the following 311-residue polypeptide: Solute carrier family 25 member 36 (311 aa).

Solcar repeat units lie at residues 4–108, 116–203, and 224–308; these read RDTL…CKEK, DSTQ…IKQK, and SDFV…VVYL. The next 6 helical transmembrane spans lie at 7–27, 41–57, 111–131, 180–200, 226–246, and 291–311; these read LVHLFAGGCGGTVGAILTCPL, LYISEVQLNTMAGASVN, GVFDPDSTQVHMASAAMAGFT, MSASYAGISETVIHFVIYESI, FVRMMLAAATSKTCATTIAYP, and QIPNTAIMMATYELVVYLLNG.

The protein belongs to the mitochondrial carrier (TC 2.A.29) family.

Its subcellular location is the mitochondrion inner membrane. The catalysed reaction is UTP(in) + CTP(out) = UTP(out) + CTP(in). The enzyme catalyses CTP(out) + UDP(in) = CTP(in) + UDP(out). It catalyses the reaction UMP(in) + CTP(out) = UMP(out) + CTP(in). It carries out the reaction dUTP(in) + CTP(out) = dUTP(out) + CTP(in). The catalysed reaction is dUMP(in) + CTP(out) = dUMP(out) + CTP(in). The enzyme catalyses CDP(in) + CTP(out) = CDP(out) + CTP(in). It catalyses the reaction CTP(out) + CMP(in) = CTP(in) + CMP(out). It carries out the reaction dCTP(in) + CTP(out) = dCTP(out) + CTP(in). The catalysed reaction is dCDP(in) + CTP(out) = dCDP(out) + CTP(in). The enzyme catalyses dCMP(in) + CTP(out) = dCMP(out) + CTP(in). It catalyses the reaction GTP(in) + CTP(out) = GTP(out) + CTP(in). It carries out the reaction CTP(out) + GDP(in) = CTP(in) + GDP(out). The catalysed reaction is GMP(in) + CTP(out) = GMP(out) + CTP(in). The enzyme catalyses dGTP(in) + CTP(out) = dGTP(out) + CTP(in). It catalyses the reaction dGMP(in) + CTP(out) = dGMP(out) + CTP(in). It carries out the reaction ITP(in) + CTP(out) = ITP(out) + CTP(in). The catalysed reaction is IDP(in) + CTP(out) = IDP(out) + CTP(in). The enzyme catalyses IMP(in) + CTP(out) = IMP(out) + CTP(in). It catalyses the reaction CTP(out) = CTP(in). Its function is as follows. Mitochondrial transporter that imports/exports pyrimidine nucleotides into and from mitochondria. Selectively transports cytosine, guanosine, inosine and uridine (deoxy)nucleoside mono-, di-, and triphosphates by antiport mechanism. Catalyzes uniport at much lower rate. May import (deoxy)nucleoside triphosphates in exchange for intramitochondrial (deoxy)nucleoside mono- and diphosphates, thus providing precursors necessary for de novo synthesis of mitochondrial DNA and RNA while exporting products of their catabolism. Participates in mitochondrial genome maintenance, regulation of mitochondrial membrane potential and mitochondrial respiration. The protein is Solute carrier family 25 member 36 (Slc25a36) of Mus musculus (Mouse).